A 483-amino-acid chain; its full sequence is Glutamyl-tRNA(Gln) amidotransferase subunit A (483 aa).

Catalysis depends on charge relay system residues lysine 76 and serine 151. Residue serine 175 is the Acyl-ester intermediate of the active site.

It belongs to the amidase family. GatA subfamily. Heterotrimer of A, B and C subunits.

It carries out the reaction L-glutamyl-tRNA(Gln) + L-glutamine + ATP + H2O = L-glutaminyl-tRNA(Gln) + L-glutamate + ADP + phosphate + H(+). Its function is as follows. Allows the formation of correctly charged Gln-tRNA(Gln) through the transamidation of misacylated Glu-tRNA(Gln) in organisms which lack glutaminyl-tRNA synthetase. The reaction takes place in the presence of glutamine and ATP through an activated gamma-phospho-Glu-tRNA(Gln). The sequence is that of Glutamyl-tRNA(Gln) amidotransferase subunit A from Azotobacter vinelandii (strain DJ / ATCC BAA-1303).